The sequence spans 922 residues: MSDYKSSLNLPATQFPMKANLANREGGFLKKWQNDGLYDQIRQQNQGKPKFVLHDGPPYANGDIHIGHTVNKVLKDMIVKSKSLSGFDAPYVPGWDCHGLPIEFNVEKKYGKVGVKIDASTFRSKCRKYADQQVLKQKQDFQRLGILSDWDNPYLTKDFQYESDIVRALGRIVKNGHVSKGYKPVHWCTECGSALAETEVEYKDNQSEAIDVKFRIIDDSVFNMNKPVSVVIWTTTPWTLPANEAVALHPELNYVLVDIGDEYLLLAQALVETSISRYGIEATIGEQTFSGSELEGLKIKHPFYDKQVPIILGEYVTIDAGTGAVHTAPAHGQEDFIVGLKYNLPVECLVDIKGVFFKETELLGGQFIFKANDSVIEILKQANTLVKHESLMHSYPHCWRHKTPVIFRATPQWFISMQKNGLIDTVNREISKVQWMPDWGKKRIELMMDSRPDWCISRQRFWGVPITLFVHKQTGELHPNTQALFVSIANRIEKEGIEAWFKSDAQDFIGNDANDYDKTTDILDVWFDSGVSHFTVLKARKELSNVADLYLEGADQHRGWFQLSLISSVAINGKAPYKNVLTHGFVVDKNGKKMSKSLGNVMSPQKIVNNLGADVLRLWIASTDYTSEMTVGDEILKRSADSYRRIRNTMRFMLANMQAFNPVEHLLDNKQMLDLDKWIVAKTANLQTQIIKAYEQYNFHHVVQLILNFCSNDLGGFYLDVIKDRQYTTQANSLARRSAQSALHHITEAMVRWLAPILSFTAEEIWQNMPSEKNTSIFLASWYQDLTFGYENKAIDITREISPFIRKQMEGMRGEKIIGSSLESEIDIYCETDIFSTLSQLDDELRFIFITSYIRIHSLNEKNDDCIKAIEGVFIKVSKSRHEKCVRCWHHREDVGNNAKHPELCGRCVENVDGKGEIRKFA.

The 'HIGH' region signature appears at Pro-58–His-68. Residue Glu-552 participates in L-isoleucyl-5'-AMP binding. Positions Lys-593 to Ser-597 match the 'KMSKS' region motif. Residue Lys-596 participates in ATP binding. Zn(2+) contacts are provided by Cys-885, Cys-888, Cys-905, and Cys-908.

Belongs to the class-I aminoacyl-tRNA synthetase family. IleS type 1 subfamily. Monomer. The cofactor is Zn(2+).

The protein localises to the cytoplasm. It catalyses the reaction tRNA(Ile) + L-isoleucine + ATP = L-isoleucyl-tRNA(Ile) + AMP + diphosphate. Functionally, catalyzes the attachment of isoleucine to tRNA(Ile). As IleRS can inadvertently accommodate and process structurally similar amino acids such as valine, to avoid such errors it has two additional distinct tRNA(Ile)-dependent editing activities. One activity is designated as 'pretransfer' editing and involves the hydrolysis of activated Val-AMP. The other activity is designated 'posttransfer' editing and involves deacylation of mischarged Val-tRNA(Ile). This chain is Isoleucine--tRNA ligase, found in Ruthia magnifica subsp. Calyptogena magnifica.